A 256-amino-acid chain; its full sequence is Triosephosphate isomerase (256 aa).

10–12 (NWK) lines the substrate pocket. H96 (electrophile) is an active-site residue. E168 functions as the Proton acceptor in the catalytic mechanism. Substrate is bound by residues G174 and S213.

This sequence belongs to the triosephosphate isomerase family. In terms of assembly, homodimer.

The protein localises to the cytoplasm. It carries out the reaction D-glyceraldehyde 3-phosphate = dihydroxyacetone phosphate. Its pathway is carbohydrate biosynthesis; gluconeogenesis. It functions in the pathway carbohydrate degradation; glycolysis; D-glyceraldehyde 3-phosphate from glycerone phosphate: step 1/1. Its function is as follows. Involved in the gluconeogenesis. Catalyzes stereospecifically the conversion of dihydroxyacetone phosphate (DHAP) to D-glyceraldehyde-3-phosphate (G3P). In Wigglesworthia glossinidia brevipalpis, this protein is Triosephosphate isomerase.